The sequence spans 479 residues: uncharacterized protein (479 aa).

Transmembrane regions (helical) follow at residues 11-31 (ILMAIPLITFLLPAPDGLSLI), 43-63 (IVGLVLKPYGEPVILLAAIAV), 90-110 (GTTWLIFTAFTLSSAFVITGL), 151-171 (SGGIIFPIINSVVVALGSDPE), 195-215 (IFLTAMAPNALALSLMAPILG), 223-243 (WFLAASVPGLLCLFLIPLICY), 274-294 (KALSVLFVIALFGWIFSNSLH), 295-315 (INATIVAIIVMVLCIVLSIVT), 328-348 (TLVWYGGIIGMSGLLEKSGFF), and 447-467 (WWITGAIIAFGSLIIHLTIGM).

The protein belongs to the SLC13A/DASS transporter (TC 2.A.47) family. DIT1 subfamily.

It localises to the cell inner membrane. This is an uncharacterized protein from Haemophilus influenzae (strain ATCC 51907 / DSM 11121 / KW20 / Rd).